The chain runs to 475 residues: Pregnancy-specific glycoprotein 22 (475 aa).

The N-terminal stretch at 1–35 is a signal peptide; it reads MEVSSELLSNGWTSWQRVLLTASLLTCWLLPITAG. Ig-like V-type domains follow at residues 44 to 140, 162 to 260, and 280 to 380; these read KLVE…FLQV, PASV…YLQV, and PVPP…QVNV. Asn-103, Asn-110, and Asn-231 each carry an N-linked (GlcNAc...) asparagine glycan. The Ig-like C2-type domain maps to 387–471; the sequence is PVMRVTDSTV…SKTSLPVRLT (85 aa). Cysteines 406 and 454 form a disulfide.

This sequence belongs to the immunoglobulin superfamily. CEA family.

The protein resides in the secreted. Its function is as follows. May have an angiogenic function during early placental development. Binds to cell-surface heparan sulfate proteoglycans (HSPGs), and stimulates secretion of the proangiogenic factors VEGFA and TGFB from uterine dendritic cells and natural killer cells. Also induces endothelial tube formation in vitro. This chain is Pregnancy-specific glycoprotein 22, found in Mus musculus (Mouse).